Consider the following 226-residue polypeptide: Large ribosomal subunit protein uL1 (226 aa).

The protein belongs to the universal ribosomal protein uL1 family. Part of the 50S ribosomal subunit.

Binds directly to 23S rRNA. The L1 stalk is quite mobile in the ribosome, and is involved in E site tRNA release. Its function is as follows. Protein L1 is also a translational repressor protein, it controls the translation of the L11 operon by binding to its mRNA. The sequence is that of Large ribosomal subunit protein uL1 from Treponema pallidum (strain Nichols).